The sequence spans 214 residues: NADH-quinone oxidoreductase subunit C (214 aa).

Belongs to the complex I 30 kDa subunit family. In terms of assembly, NDH-1 is composed of 14 different subunits. Subunits NuoB, C, D, E, F, and G constitute the peripheral sector of the complex.

The protein localises to the cell inner membrane. It carries out the reaction a quinone + NADH + 5 H(+)(in) = a quinol + NAD(+) + 4 H(+)(out). Its function is as follows. NDH-1 shuttles electrons from NADH, via FMN and iron-sulfur (Fe-S) centers, to quinones in the respiratory chain. The immediate electron acceptor for the enzyme in this species is believed to be ubiquinone. Couples the redox reaction to proton translocation (for every two electrons transferred, four hydrogen ions are translocated across the cytoplasmic membrane), and thus conserves the redox energy in a proton gradient. This is NADH-quinone oxidoreductase subunit C from Francisella tularensis subsp. holarctica (strain LVS).